Here is a 301-residue protein sequence, read N- to C-terminus: uncharacterized protein (301 aa).

The signal sequence occupies residues 1-22; that stretch reads MPGRFTVALVIALGGTCGVADA. The GP-PDE domain occupies 31-300; that stretch reads PMIVAHRAGT…DSPLAAQQWR (270 aa).

This is an uncharacterized protein from Mycobacterium tuberculosis (strain ATCC 25618 / H37Rv).